Here is a 163-residue protein sequence, read N- to C-terminus: MVTAIYPGTFDPLTRGHEDLVRRASGLFDKLIVGVADSKNKKPFFSLEERLTISNEVLGHYPNVHVESFSGLLKDFVRRHDARVIVRGLRAVSDFEYEFQMAGMNRYLLPDVETLFLTPSDQYQFISGTIVREIAALGGDVSKFVFPSVDKWLKEKIAAQEQG.

Threonine 9 lines the substrate pocket. Residues 9-10 (TF) and histidine 17 each bind ATP. Positions 41, 73, and 87 each coordinate substrate. ATP-binding positions include 88-90 (GLR), glutamate 98, and 123-129 (YQFISGT).

Belongs to the bacterial CoaD family. In terms of assembly, homohexamer. Requires Mg(2+) as cofactor.

The protein resides in the cytoplasm. The enzyme catalyses (R)-4'-phosphopantetheine + ATP + H(+) = 3'-dephospho-CoA + diphosphate. It participates in cofactor biosynthesis; coenzyme A biosynthesis; CoA from (R)-pantothenate: step 4/5. Its function is as follows. Reversibly transfers an adenylyl group from ATP to 4'-phosphopantetheine, yielding dephospho-CoA (dPCoA) and pyrophosphate. The protein is Phosphopantetheine adenylyltransferase of Herminiimonas arsenicoxydans.